We begin with the raw amino-acid sequence, 72 residues long: Translation initiation factor IF-1 (72 aa).

The 72-residue stretch at 1 to 72 folds into the S1-like domain; that stretch reads MAKEKDTIRT…PTRGRIVYRK (72 aa).

It belongs to the IF-1 family. Component of the 30S ribosomal translation pre-initiation complex which assembles on the 30S ribosome in the order IF-2 and IF-3, IF-1 and N-formylmethionyl-tRNA(fMet); mRNA recruitment can occur at any time during PIC assembly.

It localises to the cytoplasm. In terms of biological role, one of the essential components for the initiation of protein synthesis. Stabilizes the binding of IF-2 and IF-3 on the 30S subunit to which N-formylmethionyl-tRNA(fMet) subsequently binds. Helps modulate mRNA selection, yielding the 30S pre-initiation complex (PIC). Upon addition of the 50S ribosomal subunit IF-1, IF-2 and IF-3 are released leaving the mature 70S translation initiation complex. The chain is Translation initiation factor IF-1 from Thermus thermophilus (strain ATCC BAA-163 / DSM 7039 / HB27).